A 277-amino-acid polypeptide reads, in one-letter code: Adenylate kinase (277 aa).

Residue glycine 72–threonine 77 participates in ATP binding. The NMP stretch occupies residues alanine 92–valine 121. Residues threonine 93, arginine 98, glycine 119–valine 121, glycine 148–arginine 151, and glutamine 155 contribute to the AMP site. The segment at glycine 189–aspartate 226 is LID. ATP is bound by residues arginine 190 and serine 199–tyrosine 200. AMP-binding residues include arginine 223 and arginine 234. Residue glutamine 262 coordinates ATP.

It belongs to the adenylate kinase family. AK2 subfamily. Monomer.

Its subcellular location is the cytoplasm. The protein localises to the cytosol. It is found in the mitochondrion intermembrane space. The enzyme catalyses AMP + ATP = 2 ADP. Catalyzes the reversible transfer of the terminal phosphate group between ATP and AMP. Plays an important role in cellular energy homeostasis and in adenine nucleotide metabolism. Adenylate kinase activity is critical for regulation of the phosphate utilization and the AMP de novo biosynthesis pathways. The protein is Adenylate kinase of Eremothecium gossypii (strain ATCC 10895 / CBS 109.51 / FGSC 9923 / NRRL Y-1056) (Yeast).